We begin with the raw amino-acid sequence, 129 residues long: Small ribosomal subunit protein uS11 (129 aa).

The protein belongs to the universal ribosomal protein uS11 family. In terms of assembly, part of the 30S ribosomal subunit. Interacts with proteins S7 and S18. Binds to IF-3.

Located on the platform of the 30S subunit, it bridges several disparate RNA helices of the 16S rRNA. Forms part of the Shine-Dalgarno cleft in the 70S ribosome. This Parabacteroides distasonis (strain ATCC 8503 / DSM 20701 / CIP 104284 / JCM 5825 / NCTC 11152) protein is Small ribosomal subunit protein uS11.